A 317-amino-acid polypeptide reads, in one-letter code: Protoheme IX farnesyltransferase (317 aa).

The next 9 helical transmembrane spans lie at 36–56 (VMVL…ATVN), 57–77 (PVIA…SGCL), 108–128 (LAFG…ASNW), 129–149 (LAAG…SMWL), 157–177 (IVIG…AVTG), 184–204 (LVLF…LALV), 230–247 (IIWY…PVWL), 251–273 (GWLY…VQVY), and 284–304 (AAMG…SALL).

Belongs to the UbiA prenyltransferase family. Protoheme IX farnesyltransferase subfamily.

The protein localises to the cell inner membrane. The enzyme catalyses heme b + (2E,6E)-farnesyl diphosphate + H2O = Fe(II)-heme o + diphosphate. It participates in porphyrin-containing compound metabolism; heme O biosynthesis; heme O from protoheme: step 1/1. Its function is as follows. Converts heme B (protoheme IX) to heme O by substitution of the vinyl group on carbon 2 of heme B porphyrin ring with a hydroxyethyl farnesyl side group. The protein is Protoheme IX farnesyltransferase of Methylorubrum extorquens (strain CM4 / NCIMB 13688) (Methylobacterium extorquens).